Consider the following 285-residue polypeptide: Inositol oxygenase (285 aa).

Residues 1–28 (MKVAADPDPSLVSQRDMEPEAAKDKDSF) form a disordered region. Residues 15 to 28 (RDMEPEAAKDKDSF) are compositionally biased toward basic and acidic residues. Substrate is bound at residue Arg29. Ser33 carries the phosphoserine modification. 85 to 87 (DES) provides a ligand contact to substrate. His98, His123, and Asp124 together coordinate Fe cation. Substrate contacts are provided by residues Lys127 and 141–142 (GD). His194, His220, and Asp253 together coordinate Fe cation. 220–221 (HS) provides a ligand contact to substrate.

The protein belongs to the myo-inositol oxygenase family. The cofactor is Fe cation.

It localises to the cytoplasm. It carries out the reaction myo-inositol + O2 = D-glucuronate + H2O + H(+). It functions in the pathway polyol metabolism; myo-inositol degradation into D-glucuronate; D-glucuronate from myo-inositol: step 1/1. This chain is Inositol oxygenase (MIOX), found in Bos taurus (Bovine).